The sequence spans 594 residues: MNADFLLPYYTAQSGSSMSMFNTTMGKLQRQLYKGEYDIFKYAPIFESDFIQITKRGEVIDVHNRVRMVTMGIARTSPILPLPDVMLLARPATGCEEYAGHGQATKRKKRKAAKNLELTRLLPLRFVRISVQDHEKQQLRLKFATGRSCYLQLCPALDTRDDLFAYWEKLIYLLRPPMESNSSTCGIPAEDMMWMPVFQEDRRSLGAVNLQGKGDQDQVSIQSLHMVSEVCGATSAAYAGGEGLQNDFNKPTNVLNASIPKTSTELAEEPATGGIKEAAAAGAAAGAATGTVAGALSVAAANSAPGQVSAAIAGAATIGAGGNKGNMALAGTASMAPNSTKVAVAGAAGKSSEHVSSASMSLSREGSVSLAIAGVVLTSRTAAEADMDAAAGPPVSTRQSKSSLSGQHGRERTQASAEGCKEGRERREKDRALGRSSHRRRTGESRHKTRGDKIAQKSSSRSSFSHRANRDDKKEKGCGNPGSSRHRDSHKGVSHTPISKESRTSHKSGRSLWTTSSGSSKGLGRVSSFLRNVRANLTTKVVGTPHGRDVNVMAKMAERSTNVAIAETAEGGQGLETVGSMTPDIMETVTFEAH.

The interval 387–524 (MDAAAGPPVS…TSSGSSKGLG (138 aa)) is disordered. Over residues 396-406 (STRQSKSSLSG) the composition is skewed to polar residues. 3 stretches are compositionally biased toward basic and acidic residues: residues 408 to 433 (HGRE…DRAL), 442 to 455 (TGES…DKIA), and 468 to 477 (ANRDDKKEKG). A compositionally biased stretch (polar residues) spans 511–520 (SLWTTSSGSS).

This sequence belongs to the GARIN family. In terms of assembly, interacts (via N-terminus) with RAB2B (in GTP-bound form).

The protein localises to the golgi apparatus. Its function is as follows. RAB2B effector protein required for the compacted Golgi morphology, probably through interaction with small GTPase RAB2B. The chain is Golgi-associated RAB2 interactor protein 4 from Homo sapiens (Human).